The primary structure comprises 361 residues: Outer mitochondrial transmembrane helix translocase (361 aa).

Residues 1-15 (MVHAETFSRPLSRNE) are Mitochondrial intermembrane-facing. A helical transmembrane segment spans residues 16–32 (VVGLIFRLTIFGAVTYF). Topologically, residues 33–361 (TIKWMVDAID…QNVLTHVCLD (329 aa)) are cytoplasmic. 133–140 (GPPGCGKT) lines the ATP pocket. Position 322 is a phosphoserine (serine 322).

It belongs to the AAA ATPase family. MSP1 subfamily. In terms of assembly, interacts with GRIA2 and GRIP1 in an ATP-dependent manner. ATAD1-catalyzed ATP hydrolysis disrupts not only its binding to GRIA2 and GRIP1, but also interaction between GRIP1 and GRIA2, leading to AMPAR complex disassembly.

Its subcellular location is the mitochondrion outer membrane. The protein localises to the peroxisome membrane. The protein resides in the postsynaptic cell membrane. It carries out the reaction [protein]-with a C-terminal TM segment(out) + ATP + H2O = [protein]-with a C-terminal TM segment(in) + ADP + phosphate + H(+). In terms of biological role, outer mitochondrial translocase required to remove mislocalized tail-anchored transmembrane proteins on mitochondria. Specifically recognizes and binds tail-anchored transmembrane proteins: acts as a dislocase that mediates the ATP-dependent extraction of mistargeted tail-anchored transmembrane proteins from the mitochondrion outer membrane. Also plays a critical role in regulating the surface expression of AMPA receptors (AMPAR), thereby regulating synaptic plasticity and learning and memory. Required for NMDA-stimulated AMPAR internalization and inhibition of GRIA1 and GRIA2 recycling back to the plasma membrane; these activities are ATPase-dependent. This chain is Outer mitochondrial transmembrane helix translocase, found in Bos taurus (Bovine).